We begin with the raw amino-acid sequence, 166 residues long: Deglycase PfpI (166 aa).

A PfpI endopeptidase domain is found at 1–166 (MKILFLSANE…WMREFVKLLK (166 aa)). The active-site Nucleophile is the cysteine 100. The active site involves histidine 101.

The protein belongs to the peptidase C56 family. As to quaternary structure, homooligomer. Exists in two functional species: the predominant form is a homohexamer that comprises about 90% of the total activity, and the minor form is trimeric.

It is found in the cytoplasm. The enzyme catalyses N(omega)-(1-hydroxy-2-oxopropyl)-L-arginyl-[protein] + H2O = lactate + L-arginyl-[protein] + H(+). It carries out the reaction N(6)-(1-hydroxy-2-oxopropyl)-L-lysyl-[protein] + H2O = lactate + L-lysyl-[protein] + H(+). The catalysed reaction is S-(1-hydroxy-2-oxopropyl)-L-cysteinyl-[protein] + H2O = lactate + L-cysteinyl-[protein] + H(+). It catalyses the reaction N(omega)-(1-hydroxy-2-oxoethyl)-L-arginyl-[protein] + H2O = L-arginyl-[protein] + glycolate + H(+). The enzyme catalyses N(6)-(1-hydroxy-2-oxoethyl)-L-lysyl-[protein] + H2O = glycolate + L-lysyl-[protein] + H(+). It carries out the reaction S-(1-hydroxy-2-oxoethyl)-L-cysteinyl-[protein] + H2O = glycolate + L-cysteinyl-[protein] + H(+). In terms of biological role, deglycase that catalyzes the deglycation of the Maillard adducts formed between amino groups of proteins and reactive carbonyl groups of glyoxals. Thus, functions as a protein deglycase that repairs methylglyoxal- and glyoxal-glycated proteins, and releases repaired proteins and lactate or glycolate, respectively. Deglycates cysteine, arginine and lysine residues in proteins, and thus reactivates these proteins by reversing glycation by glyoxals. Thus, was shown to afford full protection against glycation of thioredoxin by glyoxal. Acts on early glycation intermediates (hemithioacetals and aminocarbinols), preventing the formation of advanced glycation endproducts (AGE) that cause irreversible damage. Prevents acrylamide formation in asparagine/glyoxal and asparagine/sugar mixtures, likely by degrading asparagine/glyoxal Maillard adducts formed at high temperatures. Also displays proteolytic activity. Cleaves at the carboxyl side of both basic and hydrophobic residues in the P1 position, indicating trypsin- and chymotrypsin-like specificities. This Pyrococcus furiosus (strain ATCC 43587 / DSM 3638 / JCM 8422 / Vc1) protein is Deglycase PfpI.